A 610-amino-acid chain; its full sequence is Protein SAN1 (610 aa).

A compositionally biased stretch (polar residues) spans 1 to 10 (MSESGQEQNR). 2 disordered regions span residues 1–36 (MSESGQEQNRGTNTSPNNAENNNNSNAASGPLNGGA) and 176–231 (VDST…PSIP). Positions 11–36 (GTNTSPNNAENNNNSNAASGPLNGGA) are enriched in low complexity. The segment covering 194–203 (EGTKKRKDNE) has biased composition (basic and acidic residues). Over residues 210–223 (TADNDSNPSITNAT) the composition is skewed to polar residues. The segment at 240–280 (NDEETNPSYKHSPIKLPCGHIFGRECIYKWSRLENSCPLCR) adopts an RING-type zinc-finger fold. Disordered regions lie at residues 318–348 (TAVNSTNENSSAPSENTSNTTVPTIGNASSG), 360–453 (VPQN…TDPH), 471–502 (GTSDTSATTAPGAQTVHNQGRNDSSSSDTTQG), 514–554 (GHFT…GVAS), and 569–610 (NNNS…RSSQ). The segment covering 319 to 348 (AVNSTNENSSAPSENTSNTTVPTIGNASSG) has biased composition (polar residues). Low complexity-rich tracts occupy residues 384-406 (NGPSSTTQNPPSNSGGSNNNQSP) and 425-447 (PSASDSSASPSAANGPNSNNTSS). The span at 471-492 (GTSDTSATTAPGAQTVHNQGRN) shows a compositional bias: polar residues. Over residues 493–502 (DSSSSDTTQG) the composition is skewed to low complexity. 2 stretches are compositionally biased toward polar residues: residues 533 to 554 (QQRGGSTGENNRNNLFSSGVAS) and 592 to 610 (DTTIHNDVPNDNNEQRSSQ).

Plays a specific role in mating-type regulation of yeast, by acting post-translationally to control the stability or activity of the SIR4 proteins. The polypeptide is Protein SAN1 (SAN1) (Saccharomyces cerevisiae (strain ATCC 204508 / S288c) (Baker's yeast)).